The chain runs to 451 residues: Tubulin alpha-1 chain (451 aa).

Q11 serves as a coordination point for GTP. Residue K40 is modified to N6-acetyllysine. Positions 71, 144, 145, 179, 206, and 228 each coordinate GTP. Position 71 (E71) interacts with Mg(2+). E254 is a catalytic residue.

Belongs to the tubulin family. Dimer of alpha and beta chains. A typical microtubule is a hollow water-filled tube with an outer diameter of 25 nm and an inner diameter of 15 nM. Alpha-beta heterodimers associate head-to-tail to form protofilaments running lengthwise along the microtubule wall with the beta-tubulin subunit facing the microtubule plus end conferring a structural polarity. Microtubules usually have 13 protofilaments but different protofilament numbers can be found in some organisms and specialized cells. Requires Mg(2+) as cofactor. Undergoes a tyrosination/detyrosination cycle, the cyclic removal and re-addition of a C-terminal tyrosine residue by the enzymes tubulin tyrosine carboxypeptidase (TTCP) and tubulin tyrosine ligase (TTL), respectively. Post-translationally, acetylation of alpha chains at Lys-40 stabilizes microtubules and affects affinity and processivity of microtubule motors. This modification has a role in multiple cellular functions, ranging from cell motility, cell cycle progression or cell differentiation to intracellular trafficking and signaling.

Its subcellular location is the cytoplasm. The protein resides in the cytoskeleton. It catalyses the reaction GTP + H2O = GDP + phosphate + H(+). Tubulin is the major constituent of microtubules, a cylinder consisting of laterally associated linear protofilaments composed of alpha- and beta-tubulin heterodimers. Microtubules grow by the addition of GTP-tubulin dimers to the microtubule end, where a stabilizing cap forms. Below the cap, tubulin dimers are in GDP-bound state, owing to GTPase activity of alpha-tubulin. This chain is Tubulin alpha-1 chain (TUBA1), found in Eleusine indica (Goosegrass).